Reading from the N-terminus, the 594-residue chain is CDPK-related kinase 4 (594 aa).

The segment at 1-131 (MGHCYSRNIS…DSGGGERLDK (131 aa)) is disordered. The N-myristoyl glycine moiety is linked to residue Gly-2. The segment covering 37–58 (IPQSPVASGTPEVNSYNISPFQ) has biased composition (polar residues). Residues 116-131 (VVDHGGDSGGGERLDK) are compositionally biased toward basic and acidic residues. The Protein kinase domain maps to 143 to 405 (YELGKEVGRG…AAQALAHPWL (263 aa)). ATP-binding positions include 149–157 (VGRGHFGHT) and Lys-175. Asp-271 acts as the Proton acceptor in catalysis. Ser-311 is subject to Phosphoserine. The segment at 409-439 (NPGLLLDFSVYKLVKSYIRASPFRRSALKAL) is autoinhibitory domain. Residues 428 to 448 (ASPFRRSALKALSKAIPDEEL) form a calmodulin binding (CaMBD) region. EF-hand domains lie at 446–481 (EELVFLKAQFMLLDPKDGGLSLNCFTMALTRYATDA), 482–517 (MMESRLPDILNTMQPLAQKKLDFEEFCAAAVSVYQL), 518–557 (EALEEWEQIATSAFEHFEHEGNRIISVQELAGEMSVGPSA), and 558–587 (YPLLKDWIRSSDGKLSFLGYAKFLHGVTVR). Positions 462, 501, 506, 539, 546, 567, 569, and 571 each coordinate Ca(2+). A Phosphoserine modification is found at Ser-573.

The protein belongs to the protein kinase superfamily. Ser/Thr protein kinase family. CDPK subfamily. As to quaternary structure, binds calmodulin (CaM) in a calcium-dependent manner. In terms of processing, autophosphorylated.

It is found in the cell membrane. The enzyme catalyses L-seryl-[protein] + ATP = O-phospho-L-seryl-[protein] + ADP + H(+). The catalysed reaction is L-threonyl-[protein] + ATP = O-phospho-L-threonyl-[protein] + ADP + H(+). Activated by calcium and calmodulin. Autophosphorylation may play an important role in the regulation of the kinase activity. In terms of biological role, may play a role in signal transduction pathways that involve calcium as a second messenger. This is CDPK-related kinase 4 (CRK4) from Arabidopsis thaliana (Mouse-ear cress).